The primary structure comprises 333 residues: NADH-quinone oxidoreductase subunit H (333 aa).

Helical transmembrane passes span 15–35 (FFIF…FVTY), 88–108 (FILA…VIPF), 117–137 (IGVG…GVVT), 159–179 (ISYE…AGSL), 191–211 (VWYI…AVAE), 239–259 (WAFF…LITV), 272–294 (GFIP…LIWF), and 313–333 (ILLP…ELFF).

The protein belongs to the complex I subunit 1 family. NDH-1 is composed of 14 different subunits. Subunits NuoA, H, J, K, L, M, N constitute the membrane sector of the complex.

It localises to the cell membrane. The catalysed reaction is a quinone + NADH + 5 H(+)(in) = a quinol + NAD(+) + 4 H(+)(out). NDH-1 shuttles electrons from NADH, via FMN and iron-sulfur (Fe-S) centers, to quinones in the respiratory chain. The immediate electron acceptor for the enzyme in this species is believed to be ubiquinone. Couples the redox reaction to proton translocation (for every two electrons transferred, four hydrogen ions are translocated across the cytoplasmic membrane), and thus conserves the redox energy in a proton gradient. This subunit may bind ubiquinone. The sequence is that of NADH-quinone oxidoreductase subunit H from Bacillus mycoides (strain KBAB4) (Bacillus weihenstephanensis).